Consider the following 459-residue polypeptide: uncharacterized protein (459 aa).

The next 2 helical transmembrane spans lie at 53–75 and 111–133; these read IPLLPVLALSVGALTVLGQGLTL and ARIARVLLLVAGVFTLVIVCLCA. The segment at 174–196 is disordered; that stretch reads HLDNPSAPHPSENPQSRAHPKQN.

It is found in the cell membrane. This is an uncharacterized protein from Treponema pallidum (strain Nichols).